A 367-amino-acid chain; its full sequence is Peptide chain release factor 1 (367 aa).

Q243 carries the N5-methylglutamine modification.

Belongs to the prokaryotic/mitochondrial release factor family. Methylated by PrmC. Methylation increases the termination efficiency of RF1.

The protein resides in the cytoplasm. Functionally, peptide chain release factor 1 directs the termination of translation in response to the peptide chain termination codons UAG and UAA. The chain is Peptide chain release factor 1 from Acidovorax sp. (strain JS42).